The primary structure comprises 97 residues: DNA/RNA-binding protein Alba 1 (97 aa).

Position 2 is an N-acetylserine; by ard1 acetylase (serine 2). RNA contacts are provided by lysine 16, lysine 17, and tyrosine 22. Lysine 16 carries the post-translational modification N6,N6,N6-trimethyllysine; alternate. Lysine 16 carries the N6,N6-dimethyllysine; alternate modification. Lysine 16 is modified (N6-acetyllysine; alternate). At lysine 16 the chain carries N6-methyllysine; alternate. At asparagine 31 the chain carries Deamidated asparagine; partial. A Deamidated glutamine; partial modification is found at glutamine 32. Residue lysine 40 is modified to N6-methyllysine; partial. The RNA site is built by arginine 42 and arginine 44. Lysine 48 carries the N6-acetyllysine; partial modification. At aspartate 51 the chain carries Aspartate methyl ester; partial. Deamidated asparagine; partial is present on asparagine 58. N6-acetyllysine; alternate; partial is present on lysine 64. Lysine 64 carries the N6-methyllysine; alternate; partial modification. Lysine 68 is subject to N6-acetyllysine; partial. Position 75 is an N5-methylglutamine; partial (glutamine 75). Aspartate 81 carries the aspartate methyl ester; partial modification. Residue lysine 97 is modified to N6-methyllysine; partial.

Belongs to the histone-like Alba family. As to quaternary structure, forms homodimers and higher order oligomers, e.g. homotetramers. In terms of processing, acetylated. Acetylation at Lys-16 by the Pat acetylase decreases DNA-binding affinity. Deacetylation at Lys-16 by the CobB deacetylase increases DNA-binding affinity. Acetylation at Ser-2 is involved in the regulation of the turnover of the protein.

It localises to the cytoplasm. The protein localises to the chromosome. Its function is as follows. Binds double-stranded DNA tightly but without sequence specificity. Involved in DNA compaction. Possesses DNA endonuclease activity. Prevents transcription after DNA binding. Binds single-stranded DNA and RNA in vitro. Binds rRNA and mRNA in vivo. May play a role in maintaining the structural and functional stability of RNA, and, perhaps, ribosomes. Binds double-stranded RNA (dsRNA) and exhibits RNA chaperone activity. Required for normal growth. The polypeptide is DNA/RNA-binding protein Alba 1 (Saccharolobus islandicus (strain REY15A) (Sulfolobus islandicus)).